We begin with the raw amino-acid sequence, 363 residues long: DNA replication and repair protein RecF (363 aa).

An ATP-binding site is contributed by glycine 30–threonine 37.

Belongs to the RecF family.

The protein resides in the cytoplasm. Its function is as follows. The RecF protein is involved in DNA metabolism; it is required for DNA replication and normal SOS inducibility. RecF binds preferentially to single-stranded, linear DNA. It also seems to bind ATP. The sequence is that of DNA replication and repair protein RecF from Vibrio cholerae serotype O1 (strain ATCC 39541 / Classical Ogawa 395 / O395).